The chain runs to 791 residues: Splicing factor 3A subunit 1 (791 aa).

The disordered stretch occupies residues 1-41 (MQAGPVQAVPPPPPVATESKQPIEEEASSKEDPTPSKPVVG). A Glycyl lysine isopeptide (Lys-Gly) (interchain with G-Cter in SUMO2) cross-link involves residue lysine 20. Residues 21–34 (QPIEEEASSKEDPT) are compositionally biased toward basic and acidic residues. One copy of the SURP motif 1 repeat lies at 52–94 (IVDKTASFVARNGPEFEARIRQNEINNPKFNFLNPNDPYHAYY). Lysine 55 carries the N6-acetyllysine modification. Residue lysine 131 forms a Glycyl lysine isopeptide (Lys-Gly) (interchain with G-Cter in SUMO2) linkage. An SURP motif 2 repeat occupies 166–208 (VVKLTAQFVARNGRQFLTQLMQKEQRNYQFDFLRPQHSLFNYF). The disordered stretch occupies residues 318–411 (GESEEVEMEV…APAPDEYLVS (94 aa)). Phosphoserine is present on residues serine 320 and serine 329. Residues 320 to 336 (SEEVEMEVESDEEDQEK) are compositionally biased toward acidic residues. A compositionally biased stretch (polar residues) spans 340–351 (TPSQLDQDTQVQ). Over residues 352-362 (DMDEGSDDEEE) the composition is skewed to acidic residues. Residue serine 357 is modified to Phosphoserine. The segment covering 366–382 (VPPPPETPMPPPLPPTP) has biased composition (pro residues). Basic and acidic residues predominate over residues 386 to 395 (IVRKDYDPKA). Phosphoserine is present on serine 411. Residue lysine 422 forms a Glycyl lysine isopeptide (Lys-Gly) (interchain with G-Cter in SUMO2) linkage. A Phosphoserine modification is found at serine 449. Tyrosine 454 carries the phosphotyrosine modification. Residues 486–500 (IGEEEIQKPEEKVTW) show a composition bias toward basic and acidic residues. Disordered stretches follow at residues 486–516 (IGEEEIQKPEEKVTWDGHSGSMARTQQAAQA), 528–582 (HKAK…AMPP), and 664–684 (PMPPVHPPPPMEDEPPSKKLK). Residue lysine 497 forms a Glycyl lysine isopeptide (Lys-Gly) (interchain with G-Cter in SUMO2) linkage. Serine 506 bears the Phosphoserine mark. Over residues 507-516 (MARTQQAAQA) the composition is skewed to polar residues. Lysine 540 participates in a covalent cross-link: Glycyl lysine isopeptide (Lys-Gly) (interchain with G-Cter in SUMO2). A compositionally biased stretch (polar residues) spans 561–570 (ATNIPSSAPP). Positions 664–673 (PMPPVHPPPP) are enriched in pro residues. Residues 678-700 (PPSKKLKTEDSLMPEEEFLRRNK) are required and sufficient for nuclear import. Residue lysine 684 forms a Glycyl lysine isopeptide (Lys-Gly) (interchain with G-Cter in SUMO2) linkage. One can recognise a Ubiquitin-like domain in the interval 705 to 788 (IKVQVPNMQD…IHLALKERGG (84 aa)). Position 757 is a phosphotyrosine (tyrosine 757).

Component of the 17S U2 SnRNP complex, a ribonucleoprotein complex that contains small nuclear RNA (snRNA) U2 and a number of specific proteins. Part of the SF3A subcomplex of the 17S U2 SnRNP complex which is composed of three subunits; SF3A3/SAP61, SF3A2/SAP62 and SF3A1/SAP114. SF3A associates with the splicing factor SF3B and a 12S RNA unit to form the mature 17S U2 small nuclear ribonucleoprotein complex (17S U2 snRNP). SF3A1 functions as a scaffold that interacts directly with both SF3A2 and SF3A3. Identified in the spliceosome 'E' complex, a precursor of the spliceosome 'A' complex. Identified in the spliceosome 'A' and 'B' complexes. Identified in the spliceosome 'C' complex. Interacts with P2RX6; resulting in a reduction of the splicing activity.

The protein localises to the nucleus. It localises to the nucleus speckle. Its function is as follows. Component of the 17S U2 SnRNP complex of the spliceosome, a large ribonucleoprotein complex that removes introns from transcribed pre-mRNAs. The 17S U2 SnRNP complex (1) directly participates in early spliceosome assembly and (2) mediates recognition of the intron branch site during pre-mRNA splicing by promoting the selection of the pre-mRNA branch-site adenosine, the nucleophile for the first step of splicing. Within the 17S U2 SnRNP complex, SF3A1 is part of the SF3A subcomplex that contributes to the assembly of the 17S U2 snRNP, and the subsequent assembly of the pre-spliceosome 'E' complex and the pre-catalytic spliceosome 'A' complex. Involved in pre-mRNA splicing as a component of pre-catalytic spliceosome 'B' complexes. This chain is Splicing factor 3A subunit 1 (Sf3a1), found in Mus musculus (Mouse).